Consider the following 465-residue polypeptide: Putative mannose-1-phosphate guanylyltransferase (465 aa).

It belongs to the mannose-6-phosphate isomerase type 2 family.

The enzyme catalyses alpha-D-mannose 1-phosphate + GTP + H(+) = GDP-alpha-D-mannose + diphosphate. The protein operates within nucleotide-sugar biosynthesis; GDP-alpha-D-mannose biosynthesis; GDP-alpha-D-mannose from alpha-D-mannose 1-phosphate (GTP route): step 1/1. It functions in the pathway bacterial outer membrane biogenesis; LPS O-antigen biosynthesis. The protein is Putative mannose-1-phosphate guanylyltransferase (rfbA) of Vibrio cholerae serotype O1 (strain ATCC 39315 / El Tor Inaba N16961).